We begin with the raw amino-acid sequence, 1116 residues long: MASSGGGGGGGEEGEGRGATKVNQELWYACAGPLVSLPPQGSLIVYFPQGHSEQVAASMRKDADAQIPSYPNLPSKLICILHSVTMLADPDTDEVYARMTLQPVSNVTQCDKETLLASELALKQTRPQTEFFCKTLTASDTSTHGGFSVPRRAAERIFPRLDFSMQPPAQELQARDLHDNVWTFRHIYRGQPKRHLLTTGWSLFVSGKRLLAGDSVLFIRDAKQQLLLGIRRANRQPTNLSSSVLSSDSMHIGILAAAAHAAANNSQFTIYYNPRASTSEFVIPFAKYQKAVYGNQLSLGMRFRMMFETEESGTRRYMGTITGISDLDPVRWKTSHWRNIQVAWDEAAPTERRTRVSLWEIEPIIAPFFIYPSPLFTAKRPRLPGMTDDETEMDGLLKRAMPWVGEEICKKDLNIQNSVVPGLNLAQWMNMQHSSSLPGTVVQPELLNSLSGKPVQNLAAADLSRQISFHPQFLQQNNIQFNTALVPQQNQQTEQLAKVIPTPNQLGSVIIPQKVVQDCNSEQRQHVVTQPVQGSQPNINIPQPQLVVQAQLQQPQVILQAQLQQPQVVVQAQLQQTQPSVQSHTVLQGGLQQIQLLQQQQPHVQHQQIPQQLHHQQQQTQQLQPVQQVQQSVQEHQQIKIQPVHVSMDASMNTQVADHQMKLQLLKALQPQQPLISEQQKMLLDLQQQVINSQSAPQQCVQVTNQAISLHNSNTIQYPTQQKVQSHQVQDLTGNVIPNSKSDIATSMGASSLHVAGGRQLLKTDDVPSTSTSPSTNSNPVLLQSIPSSSKNQSLTTAGKTSQSSVVLGPTIEQDTKPYQNVKQTVMIPKTTEQRPATGQDCINNNPQMDYLDTSSSATSVCLSQADGSLQQNFPPSSFHQHHLLKDTVPDSEFEVTDPRNNLLFGVNIDGQLGLPLNADLLANDIGTDKYMDQLPGNGISNFISSKDSQQELSSSMISHSFGVADMAFNSIDSAINDTPFLNRNSRSAAGPAHQRMRTYTKVHKRGAVGRSIDINRYSGYDELKHDVARMFGIEGQLGDQNRVGWKLVYEDHEKDVLLVGDDPWEDFVKCVRCIRILSPQEEMQMRLVGDFGDSFLPNQACSSSDGGHPWRITGD.

The segment at residues 132–234 is a DNA-binding region (TF-B3); sequence FCKTLTASDT…QLLLGIRRAN (103 aa). Positions 763–812 are disordered; that stretch reads KTDDVPSTSTSPSTNSNPVLLQSIPSSSKNQSLTTAGKTSQSSVVLGPTI. The span at 768–780 shows a compositional bias: low complexity; sequence PSTSTSPSTNSNP. The span at 781–806 shows a compositional bias: polar residues; that stretch reads VLLQSIPSSSKNQSLTTAGKTSQSSV. The region spanning 998–1082 is the PB1 domain; sequence RTYTKVHKRG…RCIRILSPQE (85 aa).

Belongs to the ARF family. Homodimers and heterodimers. Expressed in roots, culms, leaves and young panicles.

It is found in the nucleus. Its function is as follows. Auxin response factors (ARFs) are transcriptional factors that bind specifically to the DNA sequence 5'-TGTCTC-3' found in the auxin-responsive promoter elements (AuxREs). The chain is Auxin response factor 21 (ARF21) from Oryza sativa subsp. japonica (Rice).